The sequence spans 130 residues: Small ribosomal subunit protein uS9 (130 aa).

Residues 102–130 (GFLTRDPRMKERKKYGLKKARRSPQFSKR) are disordered. A compositionally biased stretch (basic residues) spans 111–130 (KERKKYGLKKARRSPQFSKR).

It belongs to the universal ribosomal protein uS9 family.

In Clostridium botulinum (strain ATCC 19397 / Type A), this protein is Small ribosomal subunit protein uS9.